The sequence spans 432 residues: Putative D-alanyl-D-alanine carboxypeptidase (432 aa).

Residues 7-25 (ATVLLTFSLSAFAVEYPVL) traverse the membrane as a helical; Signal-anchor segment.

Belongs to the peptidase S12 family. YfeW subfamily.

It localises to the cell inner membrane. It carries out the reaction Preferential cleavage: (Ac)2-L-Lys-D-Ala-|-D-Ala. Also transpeptidation of peptidyl-alanyl moieties that are N-acyl substituents of D-alanine.. The sequence is that of Putative D-alanyl-D-alanine carboxypeptidase from Salmonella typhi.